The primary structure comprises 224 residues: UPF0173 metal-dependent hydrolase TON_1314 (224 aa).

It belongs to the UPF0173 family.

This Thermococcus onnurineus (strain NA1) protein is UPF0173 metal-dependent hydrolase TON_1314.